The primary structure comprises 282 residues: MKIVTTVQDMQQITSELRASGKSIGFVPTMGYLHEGHATLLRKAREENKIVVLSVFVNPLQFGPNEDLDRYPRDIDRDENVAKENGVDYLFYPSVEEMYPAEQTTTVEVVKRTDVLCGQQRPGHFAGVATVLMKLFNITVPTRAYFGMKDAQQVAVIEGFVTDFNIPVTIVPVDIVREEDGLAKSSRNVYLSQDEREEALHLYRSLCIAKERIEAGERNPEIITNLVKDYIETHTKGTVDYADLYAYPSLTMVEKVEGRIILAIAVKFENVRLIDNITLTVK.

Methionine 30–histidine 37 serves as a coordination point for ATP. The active-site Proton donor is histidine 37. Glutamine 61 provides a ligand contact to (R)-pantoate. Position 61 (glutamine 61) interacts with beta-alanine. ATP is bound at residue glycine 147–aspartate 150. Glutamine 153 serves as a coordination point for (R)-pantoate. ATP-binding positions include valine 176 and lysine 184 to arginine 187.

The protein belongs to the pantothenate synthetase family. As to quaternary structure, homodimer.

The protein localises to the cytoplasm. The enzyme catalyses (R)-pantoate + beta-alanine + ATP = (R)-pantothenate + AMP + diphosphate + H(+). It participates in cofactor biosynthesis; (R)-pantothenate biosynthesis; (R)-pantothenate from (R)-pantoate and beta-alanine: step 1/1. Catalyzes the condensation of pantoate with beta-alanine in an ATP-dependent reaction via a pantoyl-adenylate intermediate. The polypeptide is Pantothenate synthetase (Bacillus cereus (strain ATCC 14579 / DSM 31 / CCUG 7414 / JCM 2152 / NBRC 15305 / NCIMB 9373 / NCTC 2599 / NRRL B-3711)).